We begin with the raw amino-acid sequence, 468 residues long: Two-component response regulator-like APRR9 (468 aa).

The 119-residue stretch at 38–156 (RVLLVESDYS…ELKNLWQHVW (119 aa)) folds into the Response regulatory domain. Polar residues-rich tracts occupy residues 168–177 (HAQSLPASQH) and 194–203 (DQGSGAQAIN). Disordered stretches follow at residues 168-203 (HAQS…QAIN), 302-416 (VVAL…SRSQ), and 442-468 (RKKL…STKS). Over residues 315–327 (TPTESHEKLRKVT) the composition is skewed to basic and acidic residues. Residues 328 to 364 (SDQGSATTSSNQENIGSSSVSFRNQVLQSTVTNQKQD) show a composition bias toward polar residues. Basic and acidic residues-rich tracts occupy residues 371–382 (SNREKAASKEVE) and 400–409 (EKPKEEESAK). The CCT domain occupies 417–459 (REAALMKFRLKRKDRCFDKKVRYQSRKKLAEQRPRVKGQFVRT). Positions 458–468 (RTVNSDASTKS) are enriched in polar residues.

This sequence belongs to the ARR-like family. In terms of processing, phosphorylated. Phosphorylation varies throughout the diurnal cycle.

It is found in the nucleus. Functionally, transcriptional repressor of CCA1 and LHY, and positive regulator of LWD1 and LWD2 expression. Controls photoperiodic flowering response and temperature compensation. Involved in the positive and negative feedback loops of the circadian clock. Expression of several members of the ARR-like family is controlled by circadian rhythm. Regulated at the transcriptional level by a corepressor complex consisting of ELF4, ELF3, and LUX. APRR9, APRR7, and APRR5 coordinately act on the upstream region of the target genes to repress their expression from noon until midnight. The particular coordinated sequential expression of APRR9, APRR7, APRR5, APRR3 and APPR1 result to circadian waves that may be at the basis of the endogenous circadian clock. The chain is Two-component response regulator-like APRR9 (APRR9) from Arabidopsis thaliana (Mouse-ear cress).